The following is a 390-amino-acid chain: Chorismate synthase (390 aa).

NADP(+) is bound by residues arginine 48 and arginine 54. FMN is bound by residues 125-127, 238-239, glycine 278, 293-297, and arginine 319; these read RSS, NA, and KPTSS. The interval 359-390 is disordered; that stretch reads PRIPGSTTNQIHPVEMQASAPRAEDPEPDESS.

The protein belongs to the chorismate synthase family. Homotetramer. FMNH2 serves as cofactor.

The catalysed reaction is 5-O-(1-carboxyvinyl)-3-phosphoshikimate = chorismate + phosphate. Its pathway is metabolic intermediate biosynthesis; chorismate biosynthesis; chorismate from D-erythrose 4-phosphate and phosphoenolpyruvate: step 7/7. Catalyzes the anti-1,4-elimination of the C-3 phosphate and the C-6 proR hydrogen from 5-enolpyruvylshikimate-3-phosphate (EPSP) to yield chorismate, which is the branch point compound that serves as the starting substrate for the three terminal pathways of aromatic amino acid biosynthesis. This reaction introduces a second double bond into the aromatic ring system. The polypeptide is Chorismate synthase (Nitrosomonas europaea (strain ATCC 19718 / CIP 103999 / KCTC 2705 / NBRC 14298)).